Reading from the N-terminus, the 22-residue chain is Antimicrobial peptide 4 (22 aa).

As to expression, expressed by the skin glands.

The protein localises to the secreted. Its function is as follows. Has very strong antimicrobial activity against Gram-positive bacterium S.aureus and yeast C.albicans, and very weak activity against Gram-negative bacterium E.coli. Has strong hemolytic activity against human red blood cells. The polypeptide is Antimicrobial peptide 4 (Xenopus tropicalis (Western clawed frog)).